Reading from the N-terminus, the 388-residue chain is MAPVVKNEPQHAKILAIGTANPPNVFHQKDYPDFLFRVTKNEHRTDLREKFDRICEKSRTKKRYLHLTEEMLKANPNIYTYGAPSLNVRQDICNIEVPKLGQEASLKAIKEWGQPISKITHLIFCTASCVDMPGCDFQLIKLLGLDPSVTRTMIYEAGCYAGATVLRMAKDFAENNKGARVLVVCAEITTVFFHGLTDTHLDILVGQALFADGASAVIVGANPEPEIERPLFEIVACRQTILPNSEHGVVANIREMGFNYYLSGDVPKFVGGNVVDFMTKTFEKVDGKNKDWNSLFFSVHPGGPAIVDQVEEKLGLKEGKLRATRHVLSEYGNMGAPTVHFILDEMRNKSIEEGKTTTGEGLEWGVVIGIGPGLTVETAVLRSEFITY.

Cys159 is a catalytic residue.

This sequence belongs to the thiolase-like superfamily. Chalcone/stilbene synthases family. Homodimer.

The enzyme catalyses 2-hydroxybenzoyl-CoA + malonyl-CoA = 4-hydroxycoumarin + CO2 + 2 CoA. Functionally, type III polyketide synthase involved preferentially in the biosynthesis of 4-hydroxycoumarin from salicoyl-CoA. Can also use benzoyl-CoA and malonyl-CoA to produce 3,5-dihydroxybiphenyl as a major product and benzoyldiacetic acid lactone as a minor side product. Can also use m-hydroxybenzoyl-CoA as substrate, producing m-hydroxybenzoyl diacetic acid lactone as a derailment product. No activity with p-hydroxybenzoyl-CoA, CoA-linked cinnamic acids or acetyl-CoA. The polypeptide is 4-hydroxycoumarin synthase 2 (BIS3) (Sorbus aucuparia (European mountain ash)).